The chain runs to 158 residues: Transcription elongation factor GreA (158 aa).

It belongs to the GreA/GreB family.

Necessary for efficient RNA polymerase transcription elongation past template-encoded arresting sites. The arresting sites in DNA have the property of trapping a certain fraction of elongating RNA polymerases that pass through, resulting in locked ternary complexes. Cleavage of the nascent transcript by cleavage factors such as GreA or GreB allows the resumption of elongation from the new 3'terminus. GreA releases sequences of 2 to 3 nucleotides. This chain is Transcription elongation factor GreA, found in Sinorhizobium medicae (strain WSM419) (Ensifer medicae).